A 329-amino-acid polypeptide reads, in one-letter code: DNA-directed RNA polymerase subunit alpha (329 aa).

The segment at 1–235 (MQGSVTEFLK…EQLDAFVDLR (235 aa)) is alpha N-terminal domain (alpha-NTD). The alpha C-terminal domain (alpha-CTD) stretch occupies residues 249 to 329 (FDPILLRPVD…NWPPASIAED (81 aa)).

The protein belongs to the RNA polymerase alpha chain family. As to quaternary structure, homodimer. The RNAP catalytic core consists of 2 alpha, 1 beta, 1 beta' and 1 omega subunit. When a sigma factor is associated with the core the holoenzyme is formed, which can initiate transcription.

The enzyme catalyses RNA(n) + a ribonucleoside 5'-triphosphate = RNA(n+1) + diphosphate. In terms of biological role, DNA-dependent RNA polymerase catalyzes the transcription of DNA into RNA using the four ribonucleoside triphosphates as substrates. In Histophilus somni (strain 129Pt) (Haemophilus somnus), this protein is DNA-directed RNA polymerase subunit alpha.